A 574-amino-acid chain; its full sequence is Polyamine aminopropyltransferase (574 aa).

7 helical membrane passes run 22 to 42, 55 to 75, 90 to 110, 144 to 164, 188 to 208, 209 to 229, and 237 to 257; these read VLLLGIMAVLAGCGLIYEYLL, AAIYTMIGLMIVSMGLGAFAA, LTVALCGSLAILITAAVIGFG, LPYFWGVLLGLMIGMEIPLIA, IGAGIGAAIWVGFMLAIDIQL, AAALTASFNLLAGFVFIWRFW, and LLLAAHLVVTGVLLLLAIQGP. The tract at residues 254–510 is spermidine synthase; that stretch reads IQGPSWEQQF…ATLDGKDAQH (257 aa). Residues 257–505 enclose the PABS domain; the sequence is PSWEQQFNNL…WGWSIATLDG (249 aa). Gln-281 serves as a coordination point for S-methyl-5'-thioadenosine. Spermidine contacts are provided by His-317 and Asp-341. S-methyl-5'-thioadenosine is bound by residues Asp-360 and 403–404; that span reads DA. Asp-424 serves as the catalytic Proton acceptor.

Belongs to the spermidine/spermine synthase family. As to quaternary structure, homodimer or homotetramer.

The protein resides in the cell membrane. The catalysed reaction is S-adenosyl 3-(methylsulfanyl)propylamine + putrescine = S-methyl-5'-thioadenosine + spermidine + H(+). It participates in amine and polyamine biosynthesis; spermidine biosynthesis; spermidine from putrescine: step 1/1. Its function is as follows. Catalyzes the irreversible transfer of a propylamine group from the amino donor S-adenosylmethioninamine (decarboxy-AdoMet) to putrescine (1,4-diaminobutane) to yield spermidine. In Shewanella oneidensis (strain ATCC 700550 / JCM 31522 / CIP 106686 / LMG 19005 / NCIMB 14063 / MR-1), this protein is Polyamine aminopropyltransferase.